Reading from the N-terminus, the 141-residue chain is Large ribosomal subunit protein uL11 (141 aa).

This sequence belongs to the universal ribosomal protein uL11 family. In terms of assembly, part of the ribosomal stalk of the 50S ribosomal subunit. Interacts with L10 and the large rRNA to form the base of the stalk. L10 forms an elongated spine to which L12 dimers bind in a sequential fashion forming a multimeric L10(L12)X complex. One or more lysine residues are methylated.

Forms part of the ribosomal stalk which helps the ribosome interact with GTP-bound translation factors. The polypeptide is Large ribosomal subunit protein uL11 (Phytoplasma australiense).